A 407-amino-acid chain; its full sequence is Protein RecA (407 aa).

Residue 79–86 (GPESSGKT) participates in ATP binding. Residues 358-407 (LSLEASPEESDAKTLRRXASRGAGASSSRVQEGSAANDHFQDESTTAKLL) are disordered. The span at 377 to 386 (SRGAGASSSR) shows a compositional bias: low complexity.

It belongs to the RecA family.

It is found in the cytoplasm. Its function is as follows. Can catalyze the hydrolysis of ATP in the presence of single-stranded DNA, the ATP-dependent uptake of single-stranded DNA by duplex DNA, and the ATP-dependent hybridization of homologous single-stranded DNAs. It interacts with LexA causing its activation and leading to its autocatalytic cleavage. This chain is Protein RecA, found in Treponema pallidum (strain Nichols).